The chain runs to 520 residues: Developmental regulatory protein wetA (520 aa).

5 disordered regions span residues 49–72, 104–165, 236–295, 367–453, and 471–496; these read GDLP…NEWS, VPSR…MRSS, QSPS…WQSD, DHSF…GSNK, and LTGV…RRRK. 3 stretches are compositionally biased toward polar residues: residues 63–72, 104–114, and 155–165; these read SPQPWSNEWS, VPSRPTASHGL, and QSFSPSLMRSS. Over residues 237-251 the composition is skewed to low complexity; sequence SPSVSMPSPSIAMSA. Residues 252–261 show a composition bias toward polar residues; the sequence is RQQQHYIAQP. A compositionally biased stretch (low complexity) spans 262-295; that stretch reads SSSSLTNSSPSSADDIFSSSHSSDPHSLSSWQSD. A compositionally biased stretch (polar residues) spans 367–401; that stretch reads DHSFSSSNMLPATPQKFDTSFNTSQVHNVSRSPSL. Positions 420-429 are enriched in basic residues; it reads PTHRRTHSRK. Positions 436–453 are enriched in low complexity; that stretch reads NAPKPAKASGSSSRGSNK.

This sequence belongs to the wetA family.

Functionally, brlA, abaA and wetA are pivotal regulators of conidiophore development and conidium maturation. They act individually and together to regulate their own expression and that of numerous other sporulation-specific genes. Responsible for activating a set of genes whose products make up the final two conidial wall layers or direct their assembly and though this activity is responsible for acquisition of spore dormancy. This Penicillium rubens (strain ATCC 28089 / DSM 1075 / NRRL 1951 / Wisconsin 54-1255) (Penicillium chrysogenum) protein is Developmental regulatory protein wetA.